Here is a 438-residue protein sequence, read N- to C-terminus: 23S rRNA (uracil(1939)-C(5))-methyltransferase RlmD (438 aa).

One can recognise a TRAM domain in the interval 8-68 (KQKTNNVQTI…RQYGHATAKK (61 aa)). Cys81, Cys87, Cys90, and Cys168 together coordinate [4Fe-4S] cluster. Positions 271, 300, 305, 321, 348, and 369 each coordinate S-adenosyl-L-methionine. The active-site Nucleophile is Cys395.

Belongs to the class I-like SAM-binding methyltransferase superfamily. RNA M5U methyltransferase family. RlmD subfamily.

It carries out the reaction uridine(1939) in 23S rRNA + S-adenosyl-L-methionine = 5-methyluridine(1939) in 23S rRNA + S-adenosyl-L-homocysteine + H(+). Catalyzes the formation of 5-methyl-uridine at position 1939 (m5U1939) in 23S rRNA. This chain is 23S rRNA (uracil(1939)-C(5))-methyltransferase RlmD, found in Haemophilus influenzae (strain 86-028NP).